Consider the following 48-residue polypeptide: IIECFFSCEIEKDGKSKEGKPCKPKGDKDKDKKCSGGWRCKIKMCLKI.

Disulfide bonds link Cys-4–Cys-34, Cys-8–Cys-40, and Cys-22–Cys-45. Position 44 is a methionine sulfoxide; partial (Met-44).

This sequence belongs to the neurotoxin 12 (Hwtx-2) family. 01 (Ap1a) subfamily. As to expression, expressed by the venom gland.

It localises to the secreted. Is toxic to both insects and mammals. Induces reversible paralysis when injected into S.frugiperda larvae. Reduces both the amplitude and frequency of responses from muscle (GF-TTM and GF-DLM) pathways in the D.melanogaster giant fiber circuit, suggesting an action at the neuromuscular junction, which is mediated by glutamatergic receptors. In mice, intracranial injection of 30 ug causes increased urination, myoclonus, hypermotility with circular movements followed by respiratory and generalized seizures resulting in death within 25-35 minutes of injection. This Acanthoscurria gomesiana (Tarantula spider) protein is U1-theraphotoxin-Agm1a.